Reading from the N-terminus, the 356-residue chain is tRNA N6-adenosine threonylcarbamoyltransferase (356 aa).

Fe cation contacts are provided by histidine 115 and histidine 119. Substrate-binding positions include 138 to 142, aspartate 171, glycine 184, and asparagine 283; that span reads LVSGG. Aspartate 311 provides a ligand contact to Fe cation.

The protein belongs to the KAE1 / TsaD family. Requires Fe(2+) as cofactor.

It localises to the cytoplasm. The catalysed reaction is L-threonylcarbamoyladenylate + adenosine(37) in tRNA = N(6)-L-threonylcarbamoyladenosine(37) in tRNA + AMP + H(+). Its function is as follows. Required for the formation of a threonylcarbamoyl group on adenosine at position 37 (t(6)A37) in tRNAs that read codons beginning with adenine. Is involved in the transfer of the threonylcarbamoyl moiety of threonylcarbamoyl-AMP (TC-AMP) to the N6 group of A37, together with TsaE and TsaB. TsaD likely plays a direct catalytic role in this reaction. The polypeptide is tRNA N6-adenosine threonylcarbamoyltransferase (Prochlorococcus marinus (strain MIT 9215)).